We begin with the raw amino-acid sequence, 150 residues long: SKP1-like protein 17 (150 aa).

An interaction with the F-box domain of F-box proteins region spans residues 92 to 150 (LDAADYLIVIGLKNLIAQAIADYTADKTVNEIRELFNIENDYTPEEEEELRKKNEWAFN).

The protein belongs to the SKP1 family. In terms of assembly, part of a SCF (SKP1-cullin-F-box) protein ligase complex. Interacts with CPR1/CPR30. Mainly detected in the siliques.

It is found in the nucleus. It functions in the pathway protein modification; protein ubiquitination. Involved in ubiquitination and subsequent proteasomal degradation of target proteins. Together with CUL1, RBX1 and a F-box protein, it forms a SCF E3 ubiquitin ligase complex. The functional specificity of this complex depends on the type of F-box protein. In the SCF complex, it serves as an adapter that links the F-box protein to CUL1. Probably implicated in incompatibility response after hybridization. The chain is SKP1-like protein 17 (ASK17) from Arabidopsis thaliana (Mouse-ear cress).